The sequence spans 306 residues: MQPQLPPLKPIPIKDRISVLYVERGNLDVLDGAFVVVDKTGVRTHLPVGGVACLMLEPGTRVSHAAVTLASRIGCLLVWIGEAGVRLYASGQPGGARADRLLYQAKLALDDSARLKVVRKMYALRFREEPPERRSVEQLRGIEGVRVRKMYELLARQHGVAWKARNYDHTQWESGDVPNRCLSSATACLYGICEAAILAAGYAPAVGFIHTGKPQSFVYDIADIFKFETVVPVAFRIAAKKPRDPEREVRLACRDAFRQSKILHRIIPTIEQVLAAGGMDVPTPPPESVEAVIPNKEGIGDAGHRG.

The Mn(2+) site is built by Glu143, His210, and Asp223.

It belongs to the CRISPR-associated endonuclease Cas1 family. As to quaternary structure, homodimer, forms a heterotetramer with a Cas2 homodimer. Mg(2+) serves as cofactor. Requires Mn(2+) as cofactor.

In terms of biological role, CRISPR (clustered regularly interspaced short palindromic repeat), is an adaptive immune system that provides protection against mobile genetic elements (viruses, transposable elements and conjugative plasmids). CRISPR clusters contain spacers, sequences complementary to antecedent mobile elements, and target invading nucleic acids. CRISPR clusters are transcribed and processed into CRISPR RNA (crRNA). Acts as a dsDNA endonuclease. Involved in the integration of spacer DNA into the CRISPR cassette. In Geobacter sulfurreducens (strain ATCC 51573 / DSM 12127 / PCA), this protein is CRISPR-associated endonuclease Cas1.